A 390-amino-acid polypeptide reads, in one-letter code: Nicotinate phosphoribosyltransferase (390 aa).

Phosphohistidine; by autocatalysis is present on His-211.

Belongs to the NAPRTase family. Post-translationally, transiently phosphorylated on a His residue during the reaction cycle. Phosphorylation strongly increases the affinity for substrates and increases the rate of nicotinate D-ribonucleotide production. Dephosphorylation regenerates the low-affinity form of the enzyme, leading to product release.

The catalysed reaction is nicotinate + 5-phospho-alpha-D-ribose 1-diphosphate + ATP + H2O = nicotinate beta-D-ribonucleotide + ADP + phosphate + diphosphate. Its pathway is cofactor biosynthesis; NAD(+) biosynthesis; nicotinate D-ribonucleotide from nicotinate: step 1/1. Catalyzes the synthesis of beta-nicotinate D-ribonucleotide from nicotinate and 5-phospho-D-ribose 1-phosphate at the expense of ATP. This is Nicotinate phosphoribosyltransferase from Chromohalobacter salexigens (strain ATCC BAA-138 / DSM 3043 / CIP 106854 / NCIMB 13768 / 1H11).